A 2226-amino-acid chain; its full sequence is DNA polymerase epsilon catalytic subunit A (2226 aa).

The disordered stretch occupies residues 1240 to 1265 (RVSKVTSRKRRNGKANNVSDSEEEER). Cysteine 2112, cysteine 2115, cysteine 2134, and cysteine 2137 together coordinate Zn(2+). The CysA-type zinc finger occupies 2112–2137 (CDYCNYIRDIDFCRDEQKNIWNCSNC). [4Fe-4S] cluster is bound by residues cysteine 2168, cysteine 2171, cysteine 2183, and cysteine 2185. Residues 2168-2185 (CSKCHQIKSDNMSEYCKC) carry the CysB motif motif.

This sequence belongs to the DNA polymerase type-B family. As to quaternary structure, heterotetramer. Consists of 4 subunits: POL2, DPB2, DPB3 and DPB4. [4Fe-4S] cluster is required as a cofactor.

The protein localises to the nucleus. It catalyses the reaction DNA(n) + a 2'-deoxyribonucleoside 5'-triphosphate = DNA(n+1) + diphosphate. Functionally, DNA polymerase II participates in chromosomal DNA replication. The sequence is that of DNA polymerase epsilon catalytic subunit A (POL2) from Debaryomyces hansenii (strain ATCC 36239 / CBS 767 / BCRC 21394 / JCM 1990 / NBRC 0083 / IGC 2968) (Yeast).